A 289-amino-acid chain; its full sequence is ATP synthase gamma chain (289 aa).

Belongs to the ATPase gamma chain family. As to quaternary structure, F-type ATPases have 2 components, CF(1) - the catalytic core - and CF(0) - the membrane proton channel. CF(1) has five subunits: alpha(3), beta(3), gamma(1), delta(1), epsilon(1). CF(0) has three main subunits: a, b and c.

It localises to the cell inner membrane. In terms of biological role, produces ATP from ADP in the presence of a proton gradient across the membrane. The gamma chain is believed to be important in regulating ATPase activity and the flow of protons through the CF(0) complex. In Azobacteroides pseudotrichonymphae genomovar. CFP2, this protein is ATP synthase gamma chain.